The following is a 1010-amino-acid chain: Sodium/potassium-transporting ATPase subunit alpha-3 (1010 aa).

A disordered region spans residues 1 to 21 (MGDKDDRFPKKKKGGTKDMDA). The Cytoplasmic portion of the chain corresponds to 1–74 (MGDKDDRFPK…NALTPPPTTP (74 aa)). The interaction with phosphoinositide-3 kinase stretch occupies residues 69-71 (PPP). A helical transmembrane segment spans residues 75–95 (EWVKFCRQLFGGFSILLWTGA). At 96 to 118 (ILCFLAYAIQAATEDEPAGDNLY) the chain is on the extracellular side. Residues 119-139 (LGIVLTAVVVITGCFSYFQEA) form a helical membrane-spanning segment. Residues 140-275 (KSSKIMESFK…TGKTPIAVEI (136 aa)) lie on the Cytoplasmic side of the membrane. Residues 201–216 (DNSSLTGESEPQSRSP) are compositionally biased toward polar residues. The tract at residues 201–221 (DNSSLTGESEPQSRSPDCTHD) is disordered. A helical transmembrane segment spans residues 276–295 (EHFIHIITGVAVFLGVTFFI). Topologically, residues 296–307 (LAIILGYTWLKA) are extracellular. The helical transmembrane segment at 308–325 (VIFLIGIIVANVPEGLLA) threads the bilayer. Residues 326–759 (TVTVCLTLTA…EEGRLIFDNL (434 aa)) are Cytoplasmic-facing. Asp363 functions as the 4-aspartylphosphate intermediate in the catalytic mechanism. Residues Asp704 and Asp708 each coordinate Mg(2+). Residues 760 to 779 (KKSIAYTLTSNIPEITPFLF) traverse the membrane as a helical segment. Topologically, residues 780–789 (FIIVNIPLAL) are extracellular. The chain crosses the membrane as a helical span at residues 790–810 (GTITILCIDLGTDMGSAISLA). The Cytoplasmic segment spans residues 811–830 (YETAESDIMKRQPRNPCRDK). The chain crosses the membrane as a helical span at residues 831-853 (LVNERLISIAYGQIGMIQALGGF). The Extracellular portion of the chain corresponds to 854–905 (FSYFVILAENGFLPSQLVGIRLNWDDRSLNDLEDSYGQQWTYEQRKIVEFTC). A helical transmembrane segment spans residues 906–925 (HTAFFVSIVVVQWADLIICK). Residues 926–938 (TRRNSVFQQGMKN) lie on the Cytoplasmic side of the membrane. Ser930 carries the post-translational modification Phosphoserine; by PKA. Residues 939 to 957 (KILIFGLFEETALAAFLSY) form a helical membrane-spanning segment. The Extracellular segment spans residues 958-972 (CPGMDVALRMYPLKP). A helical transmembrane segment spans residues 973 to 993 (TWWFWAFPYSFLIFVYDEARK). Residues 994–1010 (LILCRNPGGWVEKETYY) lie on the Cytoplasmic side of the membrane.

This sequence belongs to the cation transport ATPase (P-type) (TC 3.A.3) family. Type IIC subfamily. The sodium/potassium-transporting ATPase is composed of a catalytic alpha subunit, an auxiliary non-catalytic beta subunit and an additional regulatory subunit.

The protein resides in the cell membrane. It catalyses the reaction K(+)(out) + Na(+)(in) + ATP + H2O = K(+)(in) + Na(+)(out) + ADP + phosphate + H(+). Functionally, this is the catalytic component of the active enzyme, which catalyzes the hydrolysis of ATP coupled with the exchange of sodium and potassium ions across the plasma membrane. This action creates the electrochemical gradient of sodium and potassium ions, providing the energy for active transport of various nutrients. This is Sodium/potassium-transporting ATPase subunit alpha-3 (atp1a3) from Oreochromis mossambicus (Mozambique tilapia).